Reading from the N-terminus, the 477-residue chain is Mannitol 2-dehydrogenase (477 aa).

19 to 30 (IVHIGVGNFHRA) is an NAD(+) binding site.

Belongs to the mannitol dehydrogenase family. In terms of assembly, monomer.

It carries out the reaction D-mannitol + NAD(+) = D-fructose + NADH + H(+). This chain is Mannitol 2-dehydrogenase (mtlK), found in Cereibacter sphaeroides (Rhodobacter sphaeroides).